Here is a 261-residue protein sequence, read N- to C-terminus: Small ribosomal subunit protein uS2 (261 aa).

The tract at residues 224–261 (GKQGQDDSEDVEKEMADKAAAENDDEESIEEVVEKSED) is disordered. Residues 245–254 (ENDDEESIEE) show a composition bias toward acidic residues.

The protein belongs to the universal ribosomal protein uS2 family.

This Lactobacillus gasseri (strain ATCC 33323 / DSM 20243 / BCRC 14619 / CIP 102991 / JCM 1131 / KCTC 3163 / NCIMB 11718 / NCTC 13722 / AM63) protein is Small ribosomal subunit protein uS2.